Reading from the N-terminus, the 399-residue chain is Formaldehyde dismutase (399 aa).

C46 contributes to the Zn(2+) binding site. Residue 47 to 51 participates in NAD(+) binding; it reads GSDQH. 6 residues coordinate Zn(2+): H67, C97, C100, C103, C111, and D170. Residue T174 participates in NAD(+) binding. Position 177 (H177) interacts with Zn(2+). Residues 197-198, 218-219, R223, V263, H268, P299, 299-301, and 336-338 contribute to the NAD(+) site; these read PV, DQ, PGI, and GMA.

This sequence belongs to the zinc-containing alcohol dehydrogenase family. As to quaternary structure, homotetramer. It depends on Zn(2+) as a cofactor. NAD(+) serves as cofactor. Requires NADH as cofactor.

It carries out the reaction 2 formaldehyde + H2O = methanol + formate + H(+). Inhibited by the substrate analog pyrazole but not by NAD analogs such as AMP, ADP, ATP or N-methylnicotinamide chloride. Active against a range of primary alcohols as well as some secondary alcohols. Exhibits higher activity against alcohols with longer carbon chains. The sequence is that of Formaldehyde dismutase from Pseudomonas putida (Arthrobacter siderocapsulatus).